The chain runs to 467 residues: Mothers against decapentaplegic homolog 9 (467 aa).

Residues Pro16–Pro140 form the MH1 domain. Zn(2+)-binding residues include Cys68, Cys113, Cys125, and His130. Residues Asn174–Asp246 form a disordered region. Low complexity predominate over residues Ser205–Tyr220. The MH2 domain occupies Trp273 to Ser467.

It belongs to the dwarfin/SMAD family. In terms of assembly, interaction with the co-SMAD SMAD4. Interacts with PEBP2-alpha subunit. Interacts with RANBP3L. Phosphorylated on serine by BMP (bone morphogenetic proteins) type 1 receptor kinase. In terms of tissue distribution, expressed in heart, brain, placenta, lung, skeletal muscle, prostate, testis, ovary and small intestine. Also expressed in fetal brain, lung and kidney.

Its subcellular location is the cytoplasm. It localises to the nucleus. Transcriptional modulator activated by BMP (bone morphogenetic proteins) type 1 receptor kinase. SMAD9 is a receptor-regulated SMAD (R-SMAD). The protein is Mothers against decapentaplegic homolog 9 (SMAD9) of Homo sapiens (Human).